The sequence spans 908 residues: DNA mismatch repair protein MutS (908 aa).

659 to 666 (GPNMAGKS) contributes to the ATP binding site.

The protein belongs to the DNA mismatch repair MutS family.

Functionally, this protein is involved in the repair of mismatches in DNA. It is possible that it carries out the mismatch recognition step. This protein has a weak ATPase activity. This chain is DNA mismatch repair protein MutS, found in Parvibaculum lavamentivorans (strain DS-1 / DSM 13023 / NCIMB 13966).